Here is a 296-residue protein sequence, read N- to C-terminus: Meiotically up-regulated gene 2 protein (296 aa).

The protein belongs to the UPF0612 family.

Its subcellular location is the cytoplasm. It localises to the nucleus. In terms of biological role, has a role in meiosis. This is Meiotically up-regulated gene 2 protein (mug2) from Schizosaccharomyces pombe (strain 972 / ATCC 24843) (Fission yeast).